Consider the following 403-residue polypeptide: Octaketide synthase 1 (403 aa).

C174 is a catalytic residue. Residues S281 and 318–321 (GGRA) contribute to the CoA site.

It belongs to the thiolase-like superfamily. Chalcone/stilbene synthases family. In terms of assembly, homodimer.

It participates in secondary metabolite biosynthesis; flavonoid biosynthesis. Catalyzes the iterative condensations of 8 molecules of malonyl-CoA to produce aromatic octaketides, SEK4 and SEK4b, the products of the minimal polyketide synthase for the benzoisochromanequinone actinorhodin. May be involved in the biosynthesis of the octaketide barbaloin. This Aloe arborescens (Kidachi aloe) protein is Octaketide synthase 1.